The chain runs to 534 residues: Glycolytic genes transcriptional activator GCR2 (534 aa).

The interval 29-122 is disordered; the sequence is LQSVTNSPQT…TGNNASSSAT (94 aa). The span at 30–43 shows a compositional bias: low complexity; sequence QSVTNSPQTTTNTP. Residues 64-88 show a composition bias toward polar residues; it reads SDSTPNIDEIITSTGSNALTKTNSD. Residues 89–122 are compositionally biased toward low complexity; sequence SANGTPNGNSSSTSAISNASNPATTGNNASSSAT. Ser151 carries the phosphoserine modification. Residues 230–333 are disordered; sequence LTQGRRKGNS…SNPGTNMLFD (104 aa). The segment covering 238 to 252 has biased composition (polar residues); that stretch reads NSLNTSTKGSPSDLQ. Positions 253–279 are enriched in low complexity; the sequence is GINNGNNNGNNGNIGNGSNIKNYGNKN. The Nuclear localization signal motif lies at 281-288; the sequence is PNNRTKKR. Residues 295–304 show a composition bias toward low complexity; that stretch reads NAKNGKNNKN. Residues 312–328 are compositionally biased toward polar residues; sequence ITDTSAFSNTTISNPGT. A phosphoserine mark is found at Ser406 and Ser409. Residues 497–534 form a leucine-zipper region; that stretch reads IVQLERELELQRQETQWLRKMLIEDMGCVRSMLRDLQR.

In terms of assembly, homodimer via the leucine-zipper domain. Forms a complex with a GCR1 homodimer.

Its subcellular location is the nucleus. Transcriptional activator required for the expression of glycolytic genes. Enhances the CT box-dependent transcriptional activation of a RAP1-GCR1 complex. Required for GCR1 phosphorylation. The sequence is that of Glycolytic genes transcriptional activator GCR2 (GCR2) from Saccharomyces cerevisiae (strain ATCC 204508 / S288c) (Baker's yeast).